Consider the following 322-residue polypeptide: MTGTARSALPLPQSPARALRPSGAARAAPSLSPSRFSACPLDPSSFPTSGNKMFIGGLSWDTSKKDLTEYLSRFGEVVDCTIKTDPVTGRSRGFGFVLFKDAASVDKVLELKEHKLDGKLIDPKRAKALKGKEPPKKVFVGGLSPDTSEEQIKEYFGAFGEIENIELPMDTKTNERRGFCFITYTDEEPVKKLLESRYHQIGSGKCEIKVAQPKEVYRQQQQQQKGGRGAAAGGRGGARGRGRGQGQNWNQGFNNYYDQGYGNYNSAYGDESYSGYGGYDYTGYNYGSYGYGQGYTDYSGQQSTYGKASRGGGNHQNNYQPY.

The interval 1-36 (MTGTARSALPLPQSPARALRPSGAARAAPSLSPSRF) is disordered. The residue at position 6 (Arg6) is an Omega-N-methylarginine. The segment covering 14–36 (SPARALRPSGAARAAPSLSPSRF) has biased composition (low complexity). RRM domains follow at residues 51–133 (NKMF…KGKE) and 136–215 (KKVF…QPKE). Lys64 bears the N6-methyllysine mark. Lys112 is covalently cross-linked (Glycyl lysine isopeptide (Lys-Gly) (interchain with G-Cter in SUMO2)). N6-acetyllysine is present on Lys119. Ser144 is modified (phosphoserine). 2 disordered regions span residues 216-251 (VYRQ…NWNQ) and 299-322 (SGQQ…YQPY). The segment covering 226 to 245 (GGRGAAAGGRGGARGRGRGQ) has biased composition (gly residues). The tract at residues 245-322 (QGQNWNQGFN…GNHQNNYQPY (78 aa)) is necessary for interaction with TNPO1. Residue Arg310 is modified to Dimethylated arginine; alternate. Arg310 carries the post-translational modification Omega-N-methylarginine; alternate.

In terms of assembly, interacts with TNPO1 and ZNF148. Post-translationally, dimethylation of Arg-310 is probably of the asymmetric type.

The protein localises to the nucleus. It localises to the cytoplasm. Functionally, acts as a transcriptional regulator. Promotes transcription repression. Promotes transcription activation in differentiated myotubes. Binds to double- and single-stranded DNA sequences. Binds to the transcription suppressor CATR sequence of the COX5B promoter. Binds with high affinity to RNA molecules that contain AU-rich elements (AREs) found within the 3'-UTR of many proto-oncogenes and cytokine mRNAs. Binds both to nuclear and cytoplasmic poly(A) mRNAs. Binds to poly(G) and poly(A), but not to poly(U) or poly(C) RNA homopolymers. Binds to the 5'-ACUAGC-3' RNA consensus sequence. The protein is Heterogeneous nuclear ribonucleoprotein D-like (Hnrnpdl) of Rattus norvegicus (Rat).